The sequence spans 491 residues: Ketol-acid reductoisomerase (NADP(+)) (491 aa).

A KARI N-terminal Rossmann domain is found at Ala15–Ser208. Residues Cys45–Gln48, Arg68, Arg76, Ser78, and Asp108–Gln110 contribute to the NADP(+) site. The active site involves His132. Gly158 serves as a coordination point for NADP(+). 2 KARI C-terminal knotted domains span residues Ser209–Gln344 and Tyr345–Met484. The Mg(2+) site is built by Asp217, Glu221, Glu389, and Glu393. Substrate is bound at residue Ser414.

It belongs to the ketol-acid reductoisomerase family. It depends on Mg(2+) as a cofactor.

The catalysed reaction is (2R)-2,3-dihydroxy-3-methylbutanoate + NADP(+) = (2S)-2-acetolactate + NADPH + H(+). The enzyme catalyses (2R,3R)-2,3-dihydroxy-3-methylpentanoate + NADP(+) = (S)-2-ethyl-2-hydroxy-3-oxobutanoate + NADPH + H(+). It functions in the pathway amino-acid biosynthesis; L-isoleucine biosynthesis; L-isoleucine from 2-oxobutanoate: step 2/4. It participates in amino-acid biosynthesis; L-valine biosynthesis; L-valine from pyruvate: step 2/4. In terms of biological role, involved in the biosynthesis of branched-chain amino acids (BCAA). Catalyzes an alkyl-migration followed by a ketol-acid reduction of (S)-2-acetolactate (S2AL) to yield (R)-2,3-dihydroxy-isovalerate. In the isomerase reaction, S2AL is rearranged via a Mg-dependent methyl migration to produce 3-hydroxy-3-methyl-2-ketobutyrate (HMKB). In the reductase reaction, this 2-ketoacid undergoes a metal-dependent reduction by NADPH to yield (R)-2,3-dihydroxy-isovalerate. The protein is Ketol-acid reductoisomerase (NADP(+)) of Klebsiella pneumoniae (strain 342).